The following is a 250-amino-acid chain: Probable transcriptional regulatory protein SCO1521 (250 aa).

It belongs to the TACO1 family.

It localises to the cytoplasm. The protein is Probable transcriptional regulatory protein SCO1521 of Streptomyces coelicolor (strain ATCC BAA-471 / A3(2) / M145).